Consider the following 770-residue polypeptide: Probable methyltransferase PMT25 (770 aa).

Topologically, residues 1-17 (MAMGKYSRVDGKKSSSY) are cytoplasmic. The helical; Signal-anchor for type II membrane protein transmembrane segment at 18–38 (GLTITIVLLLSLCLVGTWMFM) threads the bilayer. At 39-770 (SSWSAPADSA…ETETIKSAIA (732 aa)) the chain is on the lumenal side. Residues 44 to 238 (PADSAGYSST…SSISKDQSSY (195 aa)) are disordered. The span at 55–79 (TAKDVSKNDLRKEEGDRDPKNFSDE) shows a compositional bias: basic and acidic residues. 2 N-linked (GlcNAc...) asparagine glycosylation sites follow: Asn75 and Asn107. Over residues 92-109 (QVKTDSENSAEGNQVNES) the composition is skewed to polar residues. Composition is skewed to basic and acidic residues over residues 110 to 124 (SGEKTEAGEERKESD) and 131 to 177 (DGEK…KAEE). Asn163 and Asn178 each carry an N-linked (GlcNAc...) asparagine glycan. Composition is skewed to polar residues over residues 205-220 (ESSTGDGAWSTQLVES) and 227-238 (QQSSISKDQSSY). N-linked (GlcNAc...) asparagine glycosylation is found at Asn244 and Asn363.

It belongs to the methyltransferase superfamily.

It localises to the golgi apparatus membrane. This Arabidopsis thaliana (Mouse-ear cress) protein is Probable methyltransferase PMT25.